The primary structure comprises 196 residues: Large ribosomal subunit protein uL5 (196 aa).

It belongs to the universal ribosomal protein uL5 family. Part of the 50S ribosomal subunit; part of the 5S rRNA/L5/L18/L25 subcomplex. Contacts the 5S rRNA and the P site tRNA. Forms a bridge to the 30S subunit in the 70S ribosome.

In terms of biological role, this is one of the proteins that bind and probably mediate the attachment of the 5S RNA into the large ribosomal subunit, where it forms part of the central protuberance. In the 70S ribosome it contacts protein S13 of the 30S subunit (bridge B1b), connecting the 2 subunits; this bridge is implicated in subunit movement. Contacts the P site tRNA; the 5S rRNA and some of its associated proteins might help stabilize positioning of ribosome-bound tRNAs. The chain is Large ribosomal subunit protein uL5 from Rhodopirellula baltica (strain DSM 10527 / NCIMB 13988 / SH1).